The sequence spans 200 residues: Recombination protein RecR (200 aa).

Residues 57–72 (CSQCRDFTEEDTCNIC) form a C4-type zinc finger. The Toprim domain occupies 81-176 (GLLCVVEMPA…KVSRIAHGIP (96 aa)).

This sequence belongs to the RecR family.

Its function is as follows. May play a role in DNA repair. It seems to be involved in an RecBC-independent recombinational process of DNA repair. It may act with RecF and RecO. The chain is Recombination protein RecR from Haemophilus influenzae (strain 86-028NP).